Reading from the N-terminus, the 78-residue chain is uncharacterized protein (78 aa).

This is an uncharacterized protein from Ureaplasma parvum serovar 3 (strain ATCC 700970).